A 113-amino-acid polypeptide reads, in one-letter code: B-type lectin plumieribetin (113 aa).

The Bulb-type lectin domain occupies 1–109 (NYLSKNDELR…STEIWNSDKN (109 aa)).

In terms of assembly, homotetramer. Interacts with alpha-1-beta-1 integrin (ITGA1/ITGB1). In terms of processing, not glycosylated. Not N-glycosylated and not O-glycosylated with the mostcommon O-linked glycoconjugates. The N-terminus is blocked. Expressed by sting venom glands and is also found in skin mucus. Not found in other tissues tested.

Its subcellular location is the secreted. Functionally, may contribute to some of the local and systemic effects of envenomation by the scorpionfish. Preferentially recognizes mannose-containing carbohydrate structures, but its interaction with single mannose residues is weak. Potently inhibits alpha-1-beta-1 integrin (ITGA1/ITGB1) binding to basement membrane collagen IV in a divalent cation-independent manner. In addition, moderately inhibits both laminin binding integrins alpha-3-beta-1 (ITGA3/ITGB1) and alpha-7-beta-1 (ITGA7/ITGB1). Weakens the cell-collagen contacts, reduces cell spreading, and alters the actin cytoskeleton, after the compensating alpha-2-beta-1 integrin is blocked. On the cellular level, fails to completely detach hepatocarcinoma HepG2 cells and primary arterial smooth muscle cells from the collagen IV fragment CB3. The protein is B-type lectin plumieribetin of Scorpaena plumieri (Spotted scorpionfish).